We begin with the raw amino-acid sequence, 193 residues long: NAD(P)H-quinone oxidoreductase subunit I (193 aa).

2 4Fe-4S ferredoxin-type domains span residues 55 to 84 (GRIH…VDWE) and 95 to 124 (KHYS…MTEE). The [4Fe-4S] cluster site is built by Cys-64, Cys-67, Cys-70, Cys-74, Cys-104, Cys-107, Cys-110, and Cys-114. The interval 169–193 (LDPHDLPSGNQRSGKRPEEIIAESD) is disordered.

It belongs to the complex I 23 kDa subunit family. As to quaternary structure, NDH-1 is composed of at least 11 different subunits. The cofactor is [4Fe-4S] cluster.

It localises to the cellular thylakoid membrane. It carries out the reaction a plastoquinone + NADH + (n+1) H(+)(in) = a plastoquinol + NAD(+) + n H(+)(out). The enzyme catalyses a plastoquinone + NADPH + (n+1) H(+)(in) = a plastoquinol + NADP(+) + n H(+)(out). NDH-1 shuttles electrons from an unknown electron donor, via FMN and iron-sulfur (Fe-S) centers, to quinones in the respiratory and/or the photosynthetic chain. The immediate electron acceptor for the enzyme in this species is believed to be plastoquinone. Couples the redox reaction to proton translocation, and thus conserves the redox energy in a proton gradient. This chain is NAD(P)H-quinone oxidoreductase subunit I, found in Rippkaea orientalis (strain PCC 8801 / RF-1) (Cyanothece sp. (strain PCC 8801)).